We begin with the raw amino-acid sequence, 374 residues long: Anhydro-N-acetylmuramic acid kinase (374 aa).

An ATP-binding site is contributed by 12-19; the sequence is GTSLDGVD.

The protein belongs to the anhydro-N-acetylmuramic acid kinase family.

It catalyses the reaction 1,6-anhydro-N-acetyl-beta-muramate + ATP + H2O = N-acetyl-D-muramate 6-phosphate + ADP + H(+). It participates in amino-sugar metabolism; 1,6-anhydro-N-acetylmuramate degradation. The protein operates within cell wall biogenesis; peptidoglycan recycling. Functionally, catalyzes the specific phosphorylation of 1,6-anhydro-N-acetylmuramic acid (anhMurNAc) with the simultaneous cleavage of the 1,6-anhydro ring, generating MurNAc-6-P. Is required for the utilization of anhMurNAc either imported from the medium or derived from its own cell wall murein, and thus plays a role in cell wall recycling. In Escherichia fergusonii (strain ATCC 35469 / DSM 13698 / CCUG 18766 / IAM 14443 / JCM 21226 / LMG 7866 / NBRC 102419 / NCTC 12128 / CDC 0568-73), this protein is Anhydro-N-acetylmuramic acid kinase.